Reading from the N-terminus, the 199-residue chain is Glycerol-3-phosphate acyltransferase (199 aa).

5 helical membrane passes run 4–24 (FALF…AILI), 56–76 (LAVL…GYYL), 80–100 (QFEL…PIFF), 115–135 (IAPI…FVFL), and 154–176 (YVWW…LIYR).

It belongs to the PlsY family. Probably interacts with PlsX.

Its subcellular location is the cell inner membrane. The catalysed reaction is an acyl phosphate + sn-glycerol 3-phosphate = a 1-acyl-sn-glycero-3-phosphate + phosphate. The protein operates within lipid metabolism; phospholipid metabolism. In terms of biological role, catalyzes the transfer of an acyl group from acyl-phosphate (acyl-PO(4)) to glycerol-3-phosphate (G3P) to form lysophosphatidic acid (LPA). This enzyme utilizes acyl-phosphate as fatty acyl donor, but not acyl-CoA or acyl-ACP. The sequence is that of Glycerol-3-phosphate acyltransferase from Haemophilus influenzae (strain PittEE).